The following is a 441-amino-acid chain: tRNA modification GTPase MnmE (441 aa).

The (6S)-5-formyl-5,6,7,8-tetrahydrofolate site is built by Arg-23, Glu-81, and Lys-121. Positions 218–363 (GFRVAIVGPP…LESWIAAFVS (146 aa)) constitute a TrmE-type G domain. Residue Asn-228 coordinates K(+). Residues 228 to 233 (NAGKSS), 247 to 253 (TDIAGTT), 272 to 275 (DTAG), and 326 to 329 (NKAD) contribute to the GTP site. Residue Ser-232 participates in Mg(2+) binding. Positions 247, 249, and 252 each coordinate K(+). Thr-253 contacts Mg(2+). Lys-441 is a binding site for (6S)-5-formyl-5,6,7,8-tetrahydrofolate.

It belongs to the TRAFAC class TrmE-Era-EngA-EngB-Septin-like GTPase superfamily. TrmE GTPase family. Homodimer. Heterotetramer of two MnmE and two MnmG subunits. It depends on K(+) as a cofactor.

It is found in the cytoplasm. Its function is as follows. Exhibits a very high intrinsic GTPase hydrolysis rate. Involved in the addition of a carboxymethylaminomethyl (cmnm) group at the wobble position (U34) of certain tRNAs, forming tRNA-cmnm(5)s(2)U34. This chain is tRNA modification GTPase MnmE, found in Hyphomonas neptunium (strain ATCC 15444).